The primary structure comprises 425 residues: UPF0597 protein UNCMA_16400 (425 aa).

It belongs to the UPF0597 family.

This chain is UPF0597 protein UNCMA_16400, found in Methanocella arvoryzae (strain DSM 22066 / NBRC 105507 / MRE50).